The sequence spans 707 residues: Polyribonucleotide nucleotidyltransferase (707 aa).

The Mg(2+) site is built by aspartate 485 and aspartate 491. Positions 552–611 (PRIYTMKIDPKKIKDVIGKGGATIRTLTEETGTSIDIDDDGTVKIAAIDGNAVKEVMARI) constitute a KH domain. Residues 621-689 (GAVYTGKVTR…RQGRIRLTMK (69 aa)) enclose the S1 motif domain.

Belongs to the polyribonucleotide nucleotidyltransferase family. As to quaternary structure, component of the RNA degradosome, which is a multiprotein complex involved in RNA processing and mRNA degradation. Requires Mg(2+) as cofactor.

The protein resides in the cytoplasm. The enzyme catalyses RNA(n+1) + phosphate = RNA(n) + a ribonucleoside 5'-diphosphate. Functionally, involved in mRNA degradation. Catalyzes the phosphorolysis of single-stranded polyribonucleotides processively in the 3'- to 5'-direction. This Actinobacillus succinogenes (strain ATCC 55618 / DSM 22257 / CCUG 43843 / 130Z) protein is Polyribonucleotide nucleotidyltransferase.